Here is an 825-residue protein sequence, read N- to C-terminus: KH domain-containing protein YLL032C (825 aa).

The KH domain maps to 482-556 (PAEESFFIPE…ANICLAKNDL (75 aa)). Over residues 727–740 (SSKSNTSNSNTNGN) the composition is skewed to low complexity. The segment at 727-766 (SSKSNTSNSNTNGNFRSMNNAKSRTTIDNTSQSGASPQRH) is disordered. The segment covering 741 to 762 (FRSMNNAKSRTTIDNTSQSGAS) has biased composition (polar residues). S762 is subject to Phosphoserine.

It is found in the cytoplasm. In Saccharomyces cerevisiae (strain ATCC 204508 / S288c) (Baker's yeast), this protein is KH domain-containing protein YLL032C.